We begin with the raw amino-acid sequence, 104 residues long: UPF0045 protein YqgV (104 aa).

Belongs to the UPF0045 family.

This is UPF0045 protein YqgV (yqgV) from Bacillus subtilis (strain 168).